Here is a 195-residue protein sequence, read N- to C-terminus: Myosin regulatory light chain, striated muscle, 25 kDa isoform (195 aa).

Positions 1–17 are enriched in basic and acidic residues; that stretch reads AKDKEKKEKKDKKKDDA. Positions 1–39 are disordered; sequence AKDKEKKEKKDKKKDDAPAEEAPAAAAAPAEEAAPTPSA. Residues 20 to 39 show a composition bias toward low complexity; that stretch reads EEAPAAAAAPAEEAAPTPSA. EF-hand domains lie at 55–90 and 124–159; these read NQIQEFKEAFTMIDQDRDGIIGPDDLGNIFQQIGRE and DTEGTLRDAFALFDEDKLGYLLEEYVKDLLTNVGDQ. Positions 68, 70, 72, and 79 each coordinate Ca(2+).

In terms of assembly, myosin is a hexamer of 2 heavy chains and 4 light chains.

Its function is as follows. Plays an important role in regulation of muscle cell contractile activity. The polypeptide is Myosin regulatory light chain, striated muscle, 25 kDa isoform (Lumbricus terrestris (Common earthworm)).